The primary structure comprises 1038 residues: MYNKIETSGNFVNMEEKIAKLWKDKDVIQKSFDRNEDGEYFTFYDGPPTANGKPHVGHVLTRVMKDLIPRYKVMKGYKVLRKAGWDTHGLPVELEIEKKLGISGKPQIEEYGVEKFVKECKDSVFKYTSLWKDMSEKLGFWVDMDNPYVTYHNTYIESVWWALKTMWEKDLLYKGHRVTPYCPRCGTALSSHEVAQGYKDVKEATAFVKFKVKGEENKYILAWTTTPWTLPSNVALAINKAYDYVEVEQNGEHLILAKDLAEKVLEGEYKVVKEFKGEELVGTEYEQLFKFEVPDKKAFYVVHADYVTLTDGTGIVHTAPAYGEDDNMTGKKYDLPLINLVDGEGKFVDSVTPWKGMFVKKADPKILEFMKENGSLYKSEKFTHSYPHCWRCDTPLLYYPKDSWFVRMTSLRDKLLENNNKINWNPDNIRTGRFGKFLENVIDWGISRDRYWGTPLPIWECECGHRECIGSIEELKEKGINVPDDIELHKPYIDGVKLTCPHCGKEMTRTNEVIDCWFDSGSMPFAQHHYPFENKEVFEKTFPAQFISEAVDQTRGWFYSLLAISTALFDTNSYENCIVLGHVLDKHGLKMSKSKGNVVDPFDVLQNEGADATRWHFYTASAPWLPTRFSEDDVKETQRKFLSTLWNVYSFYVLYAELDQFNPLEYKDFVSENVMDKWILSKLNTLIKTVEEDLDNYKITEAALELEDFVDELSNWYVRRNRSRFWSTELTDDKIGAYKTLYTVLTTIVKVAAPFVPFMAEEIYQNLVVNLDKDAIESVHLCTWPEYDLSVVDNELEGQMDLAYKIVKLGRSARNGANIKNRQPLSEMLISTKSLPDYYGDIIKEELNIKKVEFGADLSKYVNFEIKPNLPVLGKAYGRYIPAIRKAISSMDQMELAQNINNGKSVFINVDGLDEQIELTENNLLVAMQGLEGFAFAGSSGVGVILETTITEELREEGFVREILSKVQNLRKESGFEVADKIKLYFAGNETLEVVIKKFEEHIKKETLAVLISYNEDREYVDSKINGEELKIAVEKQD.

Positions 48-58 (PTANGKPHVGH) match the 'HIGH' region motif. The 'KMSKS' region signature appears at 590–594 (KMSKS). ATP is bound at residue Lys593.

Belongs to the class-I aminoacyl-tRNA synthetase family. IleS type 2 subfamily. As to quaternary structure, monomer. Zn(2+) is required as a cofactor.

The protein resides in the cytoplasm. The enzyme catalyses tRNA(Ile) + L-isoleucine + ATP = L-isoleucyl-tRNA(Ile) + AMP + diphosphate. Its function is as follows. Catalyzes the attachment of isoleucine to tRNA(Ile). As IleRS can inadvertently accommodate and process structurally similar amino acids such as valine, to avoid such errors it has two additional distinct tRNA(Ile)-dependent editing activities. One activity is designated as 'pretransfer' editing and involves the hydrolysis of activated Val-AMP. The other activity is designated 'posttransfer' editing and involves deacylation of mischarged Val-tRNA(Ile). In Clostridium novyi (strain NT), this protein is Isoleucine--tRNA ligase.